Consider the following 106-residue polypeptide: Translation initiation factor 1A 2 (106 aa).

The disordered stretch occupies residues 1 to 24; it reads MRKRREGTANNSPTPEVTRVRTPR. An S1-like domain is found at 18 to 92; it reads TRVRTPRKEN…SKADVIWKYT (75 aa).

This sequence belongs to the eIF-1A family.

Seems to be required for maximal rate of protein biosynthesis. Enhances ribosome dissociation into subunits and stabilizes the binding of the initiator Met-tRNA(I) to 40 S ribosomal subunits. The chain is Translation initiation factor 1A 2 (eIF1A2) from Methanosarcina mazei (strain ATCC BAA-159 / DSM 3647 / Goe1 / Go1 / JCM 11833 / OCM 88) (Methanosarcina frisia).